The chain runs to 163 residues: Neurotrophin-3 (163 aa).

The first 3 residues, 1 to 3, serve as a signal peptide directing secretion; that stretch reads IQS. The propeptide occupies 4-119; it reads TSMDQGILTE…VLNRTSRRKR (116 aa). Residue N112 is glycosylated (N-linked (GlcNAc...) asparagine).

This sequence belongs to the NGF-beta family.

The protein localises to the secreted. Its function is as follows. Seems to promote the survival of visceral and proprioceptive sensory neurons. The sequence is that of Neurotrophin-3 (NTF3) from Eryx colubrinus colubrinus.